We begin with the raw amino-acid sequence, 539 residues long: Laccase-1 (539 aa).

A signal peptide spans 1–21; the sequence is MAFTAISLFLAALGVINTAFA. Plastocyanin-like domains lie at 37-154 and 166-309; these read AEVN…YDPE and ESTV…HYLG. N-linked (GlcNAc...) asparagine glycosylation occurs at Asn78. 2 residues coordinate Cu cation: His88 and His90. 2 cysteine pairs are disulfide-bonded: Cys109–Cys513 and Cys141–Cys228. An N-linked (GlcNAc...) asparagine glycan is attached at Asn120. 2 residues coordinate Cu cation: His133 and His135. Asn202, Asn233, Asn240, Asn293, Asn318, Asn353, Asn385, and Asn405 each carry an N-linked (GlcNAc...) asparagine glycan. The 122-residue stretch at 374–495 folds into the Plastocyanin-like 3 domain; that stretch reads SPTVPVLLQI…GFAVVMAEDP (122 aa). The Cu cation site is built by His421, His424, and His426. N-linked (GlcNAc...) asparagine glycosylation occurs at Asn457. Cu cation-binding residues include His476, Cys477, His478, and His482. Asn532 carries N-linked (GlcNAc...) asparagine glycosylation.

The protein belongs to the multicopper oxidase family. Cu cation serves as cofactor.

Its subcellular location is the secreted. The catalysed reaction is 4 hydroquinone + O2 = 4 benzosemiquinone + 2 H2O. Its activity is regulated as follows. Inhibited by chloride ions. Inhibited by citrate. Inhibited by oxalate. Activated by acetate. Functionally, in vitro, has activity towards 2,2'-azino-bis(3-ethylbenzthiazoline-6-sulfonic acid) (ABTS), 2,6-dimethoxy-phenol, and guaiacol. Although brown rot fungi preferentially degrade hemicellulose and cellulose, the enzyme may contribute to generating small amounts of lignin breakdown products required for catalytic reactions. The chain is Laccase-1 from Fomitopsis schrenkii (Brown rot fungus).